Here is a 457-residue protein sequence, read N- to C-terminus: F-box/LRR-repeat protein At3g62440 (457 aa).

The F-box domain occupies Met1–Ser49. LRR repeat units lie at residues Gly53–Trp79, Leu147–His174, Phe177–Gly202, Trp229–Asp254, Trp283–Thr310, and Leu337–Gly362.

The sequence is that of F-box/LRR-repeat protein At3g62440 from Arabidopsis thaliana (Mouse-ear cress).